The sequence spans 556 residues: TNF receptor-associated factor 6-B (556 aa).

An RING-type; degenerate zinc finger spans residues 72–111 (CPICLMALREAVQTPCGHRFCKACIVKSLRDAGHKCPVDN). TRAF-type zinc fingers lie at residues 152–204 (RHLG…EDMS) and 205–261 (GHEL…NDLA). Positions 318-356 (SHQDCSQETRNLRETIEQLEGRLVRQDHQIRELIAKMET) form a coiled coil. The MATH domain occupies 384–533 (NGVFIWKIKG…NDTLFVRCAV (150 aa)).

This sequence belongs to the TNF receptor-associated factor family. A subfamily. Homotrimer. Homooligomer.

Its subcellular location is the cytoplasm. It is found in the cell cortex. The protein localises to the nucleus. The protein resides in the lipid droplet. It catalyses the reaction S-ubiquitinyl-[E2 ubiquitin-conjugating enzyme]-L-cysteine + [acceptor protein]-L-lysine = [E2 ubiquitin-conjugating enzyme]-L-cysteine + N(6)-ubiquitinyl-[acceptor protein]-L-lysine.. Its pathway is protein modification; protein ubiquitination. Functionally, E3 ubiquitin ligase that, together with UBE2N and UBE2V1, mediates the synthesis of 'Lys-63'-linked-polyubiquitin chains conjugated to proteins, such as IKBKG, IRAK1, AKT1 and AKT2. Also mediates ubiquitination of free/unanchored polyubiquitin chain that leads to MAP3K7 activation. This chain is TNF receptor-associated factor 6-B (traf6-b), found in Xenopus laevis (African clawed frog).